The following is a 439-amino-acid chain: Cln5-like protein 3 (439 aa).

A signal peptide spans 1–24 (MKNMLNIILTLTIIFIGLIKISIS). Residues Asn93, Asn112, Asn122, Asn138, Asn168, Asn219, Asn268, Asn289, Asn304, and Asn359 are each glycosylated (N-linked (GlcNAc...) asparagine). The chain crosses the membrane as a helical span at residues 371 to 391 (IIFISIAIGFGVVIILYISIG).

The protein belongs to the CLN5 family.

Its subcellular location is the membrane. In Dictyostelium discoideum (Social amoeba), this protein is Cln5-like protein 3 (cln5lc).